The primary structure comprises 2298 residues: Protein Ycf2 (2298 aa).

1652–1659 (GSIGTGRS) is an ATP binding site.

This sequence belongs to the Ycf2 family.

The protein localises to the plastid. The protein resides in the chloroplast stroma. Its function is as follows. Probable ATPase of unknown function. Its presence in a non-photosynthetic plant (Epifagus virginiana) and experiments in tobacco indicate that it has an essential function which is probably not related to photosynthesis. The protein is Protein Ycf2 of Aethionema cordifolium (Lebanon stonecress).